A 345-amino-acid polypeptide reads, in one-letter code: L-threonine 3-dehydrogenase (345 aa).

Cysteine 42 is a binding site for Zn(2+). Active-site charge relay system residues include threonine 44 and histidine 47. Zn(2+) is bound by residues histidine 67, glutamate 68, cysteine 97, cysteine 100, cysteine 103, and cysteine 111. NAD(+)-binding positions include isoleucine 179, aspartate 199, arginine 204, 266 to 268 (LGI), and 290 to 291 (IY).

It belongs to the zinc-containing alcohol dehydrogenase family. Homotetramer. The cofactor is Zn(2+).

Its subcellular location is the cytoplasm. The enzyme catalyses L-threonine + NAD(+) = (2S)-2-amino-3-oxobutanoate + NADH + H(+). Its pathway is amino-acid degradation; L-threonine degradation via oxydo-reductase pathway; glycine from L-threonine: step 1/2. Catalyzes the NAD(+)-dependent oxidation of L-threonine to 2-amino-3-ketobutyrate. This is L-threonine 3-dehydrogenase from Rhizobium johnstonii (strain DSM 114642 / LMG 32736 / 3841) (Rhizobium leguminosarum bv. viciae).